The sequence spans 352 residues: Adenosine deaminase (352 aa).

Position 2 is an N-acetylalanine (Ala2). Zn(2+) is bound by residues His15 and His17. Residues His17 and Asp19 each coordinate substrate. The residue at position 54 (Lys54) is an N6-acetyllysine. Gly184 is a binding site for substrate. His214 contacts Zn(2+). The active-site Proton donor is Glu217. An N6-acetyllysine modification is found at Lys232. Asp295 is a binding site for Zn(2+). Asp296 contributes to the substrate binding site.

It belongs to the metallo-dependent hydrolases superfamily. Adenosine and AMP deaminases family. Interacts with DPP4 (via extracellular domain). Interacts with PLG (via Kringle 4 domain); the interaction stimulates PLG activation when in complex with DPP4. The cofactor is Zn(2+). As to expression, detected in brain neurons in the median emninence (at protein level). Expressed in secondary deciduum (at protein level). Found in all tissues, occurs in large amounts in T-lymphocytes and, at the time of weaning, in gastrointestinal tissues.

Its subcellular location is the cell membrane. The protein localises to the cell junction. The protein resides in the cytoplasmic vesicle lumen. It localises to the cytoplasm. It is found in the lysosome. It carries out the reaction adenosine + H2O + H(+) = inosine + NH4(+). The enzyme catalyses 2'-deoxyadenosine + H2O + H(+) = 2'-deoxyinosine + NH4(+). It catalyses the reaction cordycepin + H2O + H(+) = 3'-deoxyinosine + NH4(+). Its function is as follows. Catalyzes the hydrolytic deamination of adenosine and 2-deoxyadenosine. Plays an important role in purine metabolism and in adenosine homeostasis. Modulates signaling by extracellular adenosine, and so contributes indirectly to cellular signaling events. Acts as a positive regulator of T-cell coactivation, by binding DPP4. Its interaction with DPP4 regulates lymphocyte-epithelial cell adhesion. Enhances dendritic cell immunogenicity by affecting dendritic cell costimulatory molecule expression and cytokines and chemokines secretion. Enhances CD4+ T-cell differentiation and proliferation. Acts as a positive modulator of adenosine receptors ADORA1 and ADORA2A, by enhancing their ligand affinity via conformational change. Stimulates plasminogen activation. Plays a role in male fertility. Plays a protective role in early postimplantation embryonic development. Also responsible for the deamination of cordycepin (3'-deoxyadenosine), a fungal natural product that shows antitumor, antibacterial, antifungal, antivirus, and immune regulation properties. The chain is Adenosine deaminase (Ada) from Mus musculus (Mouse).